A 330-amino-acid polypeptide reads, in one-letter code: Aspartate--ammonia ligase (330 aa).

The protein belongs to the class-II aminoacyl-tRNA synthetase family. AsnA subfamily.

It is found in the cytoplasm. The catalysed reaction is L-aspartate + NH4(+) + ATP = L-asparagine + AMP + diphosphate + H(+). It functions in the pathway amino-acid biosynthesis; L-asparagine biosynthesis; L-asparagine from L-aspartate (ammonia route): step 1/1. The sequence is that of Aspartate--ammonia ligase from Shigella sonnei (strain Ss046).